A 423-amino-acid chain; its full sequence is Polyglutamylase complex subunit TTLL1 (423 aa).

A TTL domain is found at 1–367; the sequence is MAGKVKWVTD…NGEIPDCKWN (367 aa). ATP contacts are provided by residues Lys-138, 144-145, 181-184, and 194-196; these read QG, SLYI, and KFD. Position 144 (Gln-144) interacts with a protein. Arg-220 is a binding site for L-glutamate. ATP is bound at residue 241–242; it reads TN. Position 259 (Lys-259) interacts with L-glutamate. Mg(2+)-binding residues include Asp-313, Glu-326, and Asn-328. Lys-344 contributes to the L-glutamate binding site. Positions 391-423 are disordered; sequence GADRELRSRQGQSLGPRAGRSRDSGRAVLTTWK.

Belongs to the tubulin polyglutamylase family. In terms of assembly, part of the neuronal tubulin polyglutamylase complex which contains TPGS1, TPGS2, TTLL1, LRRC49 and NICN1. Interacts with PCM1, CSTPP1 and LRRC49. The cofactor is Mg(2+). As to expression, expressed in a wide range of tissues. Has a stronger expression in heart, brain and testis.

It is found in the cytoplasm. The protein resides in the cytoskeleton. The protein localises to the cilium basal body. Its subcellular location is the cilium axoneme. It localises to the cell projection. It is found in the cilium. The protein resides in the flagellum. The enzyme catalyses (L-glutamyl)(n)-gamma-L-glutamyl-L-glutamyl-[protein] + L-glutamate + ATP = (L-glutamyl)(n+1)-gamma-L-glutamyl-L-glutamyl-[protein] + ADP + phosphate + H(+). Functionally, catalytic subunit of a polyglutamylase complex which modifies tubulin, generating side chains of glutamate on the gamma-carboxyl group of specific glutamate residues within the C-terminal tail of tubulin. Probably involved in the side-chain elongation step of the polyglutamylation reaction rather than the initiation step. Modifies both alpha- and beta-tubulins with a preference for the alpha-tail. Unlike most polyglutamylases of the tubulin--tyrosine ligase family, only displays a catalytic activity when in complex with other proteins as it is most likely lacking domains important for autonomous activity. Part of the neuronal tubulin polyglutamylase complex. Mediates cilia and flagella polyglutamylation which is essential for their biogenesis and motility. Involved in respiratory motile cilia function through the regulation of beating asymmetry. Essential for sperm flagella biogenesis, motility and male fertility. Involved in KLF4 glutamylation which impedes its ubiquitination, thereby leading to somatic cell reprogramming, pluripotency maintenance and embryogenesis. The chain is Polyglutamylase complex subunit TTLL1 from Homo sapiens (Human).